We begin with the raw amino-acid sequence, 162 residues long: NADH-quinone oxidoreductase subunit I 2 (162 aa).

4Fe-4S ferredoxin-type domains lie at Leu52 to Gly82 and Val93 to Asn122. The [4Fe-4S] cluster site is built by Cys62, Cys65, Cys68, Cys72, Cys102, Cys105, Cys108, and Cys112.

This sequence belongs to the complex I 23 kDa subunit family. In terms of assembly, NDH-1 is composed of 14 different subunits. Subunits NuoA, H, J, K, L, M, N constitute the membrane sector of the complex. [4Fe-4S] cluster is required as a cofactor.

The protein localises to the cell inner membrane. The catalysed reaction is a quinone + NADH + 5 H(+)(in) = a quinol + NAD(+) + 4 H(+)(out). In terms of biological role, NDH-1 shuttles electrons from NADH, via FMN and iron-sulfur (Fe-S) centers, to quinones in the respiratory chain. The immediate electron acceptor for the enzyme in this species is believed to be ubiquinone. Couples the redox reaction to proton translocation (for every two electrons transferred, four hydrogen ions are translocated across the cytoplasmic membrane), and thus conserves the redox energy in a proton gradient. The sequence is that of NADH-quinone oxidoreductase subunit I 2 from Rhodopseudomonas palustris (strain BisB5).